Here is a 376-residue protein sequence, read N- to C-terminus: Carbamoyl phosphate synthase small chain (376 aa).

The interval 1 to 184 is CPSase; that stretch reads MKAILALADG…SEGYQQQTGE (184 aa). S45, G236, and G238 together coordinate L-glutamine. In terms of domain architecture, Glutamine amidotransferase type-1 spans 188–374; that stretch reads KVVAYDFGIK…ADLMEKNRQS (187 aa). C263 acts as the Nucleophile in catalysis. Positions 264, 267, 305, 307, and 308 each coordinate L-glutamine. Catalysis depends on residues H347 and E349.

Belongs to the CarA family. Composed of two chains; the small (or glutamine) chain promotes the hydrolysis of glutamine to ammonia, which is used by the large (or ammonia) chain to synthesize carbamoyl phosphate. Tetramer of heterodimers (alpha,beta)4.

It catalyses the reaction hydrogencarbonate + L-glutamine + 2 ATP + H2O = carbamoyl phosphate + L-glutamate + 2 ADP + phosphate + 2 H(+). It carries out the reaction L-glutamine + H2O = L-glutamate + NH4(+). It participates in amino-acid biosynthesis; L-arginine biosynthesis; carbamoyl phosphate from bicarbonate: step 1/1. It functions in the pathway pyrimidine metabolism; UMP biosynthesis via de novo pathway; (S)-dihydroorotate from bicarbonate: step 1/3. Functionally, small subunit of the glutamine-dependent carbamoyl phosphate synthetase (CPSase). CPSase catalyzes the formation of carbamoyl phosphate from the ammonia moiety of glutamine, carbonate, and phosphate donated by ATP, constituting the first step of 2 biosynthetic pathways, one leading to arginine and/or urea and the other to pyrimidine nucleotides. The small subunit (glutamine amidotransferase) binds and cleaves glutamine to supply the large subunit with the substrate ammonia. The polypeptide is Carbamoyl phosphate synthase small chain (Syntrophotalea carbinolica (strain DSM 2380 / NBRC 103641 / GraBd1) (Pelobacter carbinolicus)).